We begin with the raw amino-acid sequence, 184 residues long: Glutathione-regulated potassium-efflux system ancillary protein KefG (184 aa).

It belongs to the NAD(P)H dehydrogenase (quinone) family. KefG subfamily. Interacts with KefB.

It is found in the cell inner membrane. It catalyses the reaction a quinone + NADH + H(+) = a quinol + NAD(+). The catalysed reaction is a quinone + NADPH + H(+) = a quinol + NADP(+). Regulatory subunit of a potassium efflux system that confers protection against electrophiles. Required for full activity of KefB. The sequence is that of Glutathione-regulated potassium-efflux system ancillary protein KefG from Escherichia coli O8 (strain IAI1).